A 427-amino-acid polypeptide reads, in one-letter code: MKNFVEELKWRGMLHDIMPGTEEYLLKNQTTAYVGFDPTASSLTIGNLVTIMMLVHFQHAGHIPMALVGGATGMIGDPSGRSEERNFLSEETLRLNQEGIRKQLTKFLDFDCGANSAKLVNNYDWFKGIGFLEFLRDAGKHLTVNYMMAKDSVKKRLEVGLTFTEFSYQLLQGYDFCHLYQKENVRLQMGGSDQWGNITSGTELIRRMADGTAFALTTPLLTKADGTKFGKSAGGNIWLDAALTSPYKFYQFWLNSADEDVSRFIRIFTLLSKEAIEALEAEHAKAPHERLLQKTLAKDITIRVHSEEDYEMAIKASEILFGKSVTEDLQALNESTLLSVFEGIPLIEISRSILDEKPSVLDLLSTLTNSEVFPSKGEARKMIQGGGVSINKIKINSSEEIVNYPLLLNNYLLVQKGKKNYYLLRFN.

L-tyrosine is bound at residue Tyr-33. The 'HIGH' region motif lies at 38 to 47; that stretch reads PTASSLTIGN. 2 residues coordinate L-tyrosine: Tyr-168 and Gln-172. Positions 228 to 232 match the 'KMSKS' region motif; sequence KFGKS. Position 231 (Lys-231) interacts with ATP. Residues 361–427 enclose the S4 RNA-binding domain; sequence LDLLSTLTNS…KKNYYLLRFN (67 aa).

Belongs to the class-I aminoacyl-tRNA synthetase family. TyrS type 1 subfamily. Homodimer.

It is found in the cytoplasm. The catalysed reaction is tRNA(Tyr) + L-tyrosine + ATP = L-tyrosyl-tRNA(Tyr) + AMP + diphosphate + H(+). In terms of biological role, catalyzes the attachment of tyrosine to tRNA(Tyr) in a two-step reaction: tyrosine is first activated by ATP to form Tyr-AMP and then transferred to the acceptor end of tRNA(Tyr). This Cytophaga hutchinsonii (strain ATCC 33406 / DSM 1761 / CIP 103989 / NBRC 15051 / NCIMB 9469 / D465) protein is Tyrosine--tRNA ligase.